The following is a 104-amino-acid chain: MTENKNFEFIENEIKNNKVVLFMKGTKEATMCGFSAKVVAILNKLGVEFRDINVFVNPEFREDLKKFSDWPTFPQLYIKGELVGGCDIATELYNNGELEKMLKG.

The region spanning 7–104 (FEFIENEIKN…NGELEKMLKG (98 aa)) is the Glutaredoxin domain. Position 24 (lysine 24) interacts with glutathione. Cysteine 32 serves as a coordination point for [2Fe-2S] cluster. Glutathione contacts are provided by residues arginine 61, phenylalanine 73, and 86–87 (CD).

This sequence belongs to the glutaredoxin family. Monothiol subfamily.

The protein is Probable monothiol glutaredoxin 2 (grxC2) of Rickettsia felis (strain ATCC VR-1525 / URRWXCal2) (Rickettsia azadi).